Reading from the N-terminus, the 378-residue chain is MATVIHNPLKALGDQFYKEAIEHCRSYNSRLCAERSVRLPFLDSQTGVAQNNCYIWMEKRHRGPGLAPGQLYTYPARCWRKKRRLHPPEDPKLRLLEIKPEVELPLKKDGFTSESTTLEALLRGEGVEKKVDAREEESIQEIQRVLENDENVEEGNEEEDLEEDIPKRKNRTRGRARGSAGGRRRHDAASQEDHDKPYVCDICGKRYKNRPGLSYHYAHTHLASEEGDEAQDQETRSPPNHRNENHRPQKGPDGTVIPNNYCDFCLGGSNMNKKSGRPEELVSCADCGRSGHPTCLQFTLNMTEAVKTYKWQCIECKSCILCGTSENDDQLLFCDDCDRGYHMYCLNPPVAEPPEGSWSCHLCWELLKEKASAFGCQA.

Lys99 is covalently cross-linked (Glycyl lysine isopeptide (Lys-Gly) (interchain with G-Cter in SUMO2)). The segment at 145 to 193 is disordered; sequence VLENDENVEEGNEEEDLEEDIPKRKNRTRGRARGSAGGRRRHDAASQED. Acidic residues predominate over residues 148-163; that stretch reads NDENVEEGNEEEDLEE. Basic residues predominate over residues 168–186; the sequence is RKNRTRGRARGSAGGRRRH. The segment at 198–221 adopts a C2H2-type zinc-finger fold; that stretch reads YVCDICGKRYKNRPGLSYHYAHTH. Positions 225–254 are disordered; the sequence is EEGDEAQDQETRSPPNHRNENHRPQKGPDG. 2 PHD-type zinc fingers span residues 259–319 and 316–366; these read NNYC…CKSC and CKSC…CWEL. The interval 317–332 is interaction with HDGFL2; it reads KSCILCGTSENDDQLL. Gly323 carries the post-translational modification Phosphoserine.

Belongs to the requiem/DPF family. In terms of assembly, component of the BAF complex, which includes at least actin (ACTB), ARID1A, ARID1B/BAF250, SMARCA2, SMARCA4/BRG1/BAF190A, ACTL6A/BAF53, ACTL6B/BAF53B, SMARCE1/BAF57, SMARCC1/BAF155, SMARCC2/BAF170, SMARCB1/SNF5/INI1, and one or more of SMARCD1/BAF60A, SMARCD2/BAF60B, or SMARCD3/BAF60C. In muscle cells, the BAF complex also contains DPF3. Interacts with acetylated histones H3 and H4. Component of neuron-specific chromatin remodeling complex (nBAF complex) composed of at least, ARID1A/BAF250A or ARID1B/BAF250B, SMARCD1/BAF60A, SMARCD3/BAF60C, SMARCA2/BRM/BAF190B, SMARCA4/BRG1/BAF190A, SMARCB1/BAF47, SMARCC1/BAF155, SMARCE1/BAF57, SMARCC2/BAF170, DPF1/BAF45B, DPF3/BAF45C, ACTL6B/BAF53B and actin. As to quaternary structure, interacts with HDGFL2, SMARCA4/BRG1/BAF190A, SMARCC1/BAF155 and SMARCD1/BAF60A. In terms of processing, phosphorylation at Ser-323 enhances its interaction with HDGFL2.

Its subcellular location is the nucleus. Its function is as follows. Belongs to the neuron-specific chromatin remodeling complex (nBAF complex). During neural development a switch from a stem/progenitor to a post-mitotic chromatin remodeling mechanism occurs as neurons exit the cell cycle and become committed to their adult state. The transition from proliferating neural stem/progenitor cells to post-mitotic neurons requires a switch in subunit composition of the npBAF and nBAF complexes. As neural progenitors exit mitosis and differentiate into neurons, npBAF complexes which contain ACTL6A/BAF53A and PHF10/BAF45A, are exchanged for homologous alternative ACTL6B/BAF53B and DPF1/BAF45B or DPF3/BAF45C subunits in neuron-specific complexes (nBAF). The npBAF complex is essential for the self-renewal/proliferative capacity of the multipotent neural stem cells. The nBAF complex along with CREST plays a role regulating the activity of genes essential for dendrite growth. Muscle-specific component of the BAF complex, a multiprotein complex involved in transcriptional activation and repression of select genes by chromatin remodeling (alteration of DNA-nucleosome topology). Specifically binds acetylated lysines on histone 3 and 4 (H3K14ac, H3K9ac, H4K5ac, H4K8ac, H4K12ac, H4K16ac). In the complex, it acts as a tissue-specific anchor between histone acetylations and methylations and chromatin remodeling. It thereby probably plays an essential role in heart and skeletal muscle development. Functionally, acts as a regulator of myogenesis in cooperation with HDGFL2. Mediates the interaction of HDGFL2 with the BAF complex. HDGFL2-DPF3a activate myogenic genes by increasing chromatin accessibility through recruitment of SMARCA4/BRG1/BAF190A (ATPase subunit of the BAF complex) to myogenic gene promoters. This Homo sapiens (Human) protein is Zinc finger protein DPF3 (DPF3).